A 196-amino-acid polypeptide reads, in one-letter code: ATP-dependent Clp protease proteolytic subunit (196 aa).

Catalysis depends on serine 96, which acts as the Nucleophile. Residue histidine 121 is part of the active site.

It belongs to the peptidase S14 family. Fourteen ClpP subunits assemble into 2 heptameric rings which stack back to back to give a disk-like structure with a central cavity, resembling the structure of eukaryotic proteasomes.

It is found in the cytoplasm. The enzyme catalyses Hydrolysis of proteins to small peptides in the presence of ATP and magnesium. alpha-casein is the usual test substrate. In the absence of ATP, only oligopeptides shorter than five residues are hydrolyzed (such as succinyl-Leu-Tyr-|-NHMec, and Leu-Tyr-Leu-|-Tyr-Trp, in which cleavage of the -Tyr-|-Leu- and -Tyr-|-Trp bonds also occurs).. Functionally, cleaves peptides in various proteins in a process that requires ATP hydrolysis. Has a chymotrypsin-like activity. Plays a major role in the degradation of misfolded proteins. The chain is ATP-dependent Clp protease proteolytic subunit from Streptococcus uberis (strain ATCC BAA-854 / 0140J).